Consider the following 405-residue polypeptide: Enoyl-[acyl-carrier-protein] reductase [NADH] (405 aa).

NAD(+) contacts are provided by residues 51 to 56 (GASSGY), 77 to 78 (FE), 114 to 115 (DA), and 142 to 143 (LA). Residue Tyr-228 coordinates substrate. The active-site Proton donor is Tyr-238. Residues Lys-247 and 276 to 278 (VVT) contribute to the NAD(+) site.

Belongs to the TER reductase family. Monomer.

The enzyme catalyses a 2,3-saturated acyl-[ACP] + NAD(+) = a (2E)-enoyl-[ACP] + NADH + H(+). It functions in the pathway lipid metabolism; fatty acid biosynthesis. Its function is as follows. Involved in the final reduction of the elongation cycle of fatty acid synthesis (FAS II). Catalyzes the reduction of a carbon-carbon double bond in an enoyl moiety that is covalently linked to an acyl carrier protein (ACP). In Chromohalobacter salexigens (strain ATCC BAA-138 / DSM 3043 / CIP 106854 / NCIMB 13768 / 1H11), this protein is Enoyl-[acyl-carrier-protein] reductase [NADH].